A 595-amino-acid polypeptide reads, in one-letter code: UvrABC system protein C (595 aa).

The region spanning 14-91 is the GIY-YIG domain; the sequence is NNPGCYLHKD…IQENMPKFNI (78 aa). A UVR domain is found at 196-231; the sequence is DKIVNQLKAKMKDMSDQMEFERAAEYRDLIEAVSTL.

It belongs to the UvrC family. Interacts with UvrB in an incision complex.

The protein resides in the cytoplasm. Functionally, the UvrABC repair system catalyzes the recognition and processing of DNA lesions. UvrC both incises the 5' and 3' sides of the lesion. The N-terminal half is responsible for the 3' incision and the C-terminal half is responsible for the 5' incision. The chain is UvrABC system protein C from Streptococcus thermophilus (strain ATCC BAA-250 / LMG 18311).